Reading from the N-terminus, the 452-residue chain is Chaperone SurA (452 aa).

The signal sequence occupies residues 1–28 (MKKTLRFAAVVSSLAAASALLAAAPAAA). 2 PpiC domains span residues 186-288 (QQDL…RLVD) and 302-400 (IVQT…QVLS).

It is found in the periplasm. It catalyses the reaction [protein]-peptidylproline (omega=180) = [protein]-peptidylproline (omega=0). Chaperone involved in the correct folding and assembly of outer membrane proteins. Recognizes specific patterns of aromatic residues and the orientation of their side chains, which are found more frequently in integral outer membrane proteins. May act in both early periplasmic and late outer membrane-associated steps of protein maturation. This chain is Chaperone SurA, found in Burkholderia lata (strain ATCC 17760 / DSM 23089 / LMG 22485 / NCIMB 9086 / R18194 / 383).